The chain runs to 467 residues: Ribulose bisphosphate carboxylase large chain (467 aa).

Positions 1-2 are excised as a propeptide; it reads MS. P3 carries the post-translational modification N-acetylproline. K14 carries the N6,N6,N6-trimethyllysine modification. Substrate is bound by residues N123 and T173. K175 functions as the Proton acceptor in the catalytic mechanism. K177 is a substrate binding site. Residues K201, D203, and E204 each coordinate Mg(2+). K201 is modified (N6-carboxylysine). The active-site Proton acceptor is H294. Positions 295, 327, and 379 each coordinate substrate.

This sequence belongs to the RuBisCO large chain family. Type I subfamily. In terms of assembly, heterohexadecamer of 8 large chains and 8 small chains; disulfide-linked. The disulfide link is formed within the large subunit homodimers. Requires Mg(2+) as cofactor. The disulfide bond which can form in the large chain dimeric partners within the hexadecamer appears to be associated with oxidative stress and protein turnover.

Its subcellular location is the plastid. It is found in the chloroplast. The catalysed reaction is 2 (2R)-3-phosphoglycerate + 2 H(+) = D-ribulose 1,5-bisphosphate + CO2 + H2O. The enzyme catalyses D-ribulose 1,5-bisphosphate + O2 = 2-phosphoglycolate + (2R)-3-phosphoglycerate + 2 H(+). Functionally, ruBisCO catalyzes two reactions: the carboxylation of D-ribulose 1,5-bisphosphate, the primary event in carbon dioxide fixation, as well as the oxidative fragmentation of the pentose substrate in the photorespiration process. Both reactions occur simultaneously and in competition at the same active site. This is Ribulose bisphosphate carboxylase large chain from Phoenix reclinata (Senegal date palm).